The primary structure comprises 359 residues: tRNA-specific 2-thiouridylase MnmA (359 aa).

ATP contacts are provided by residues 11–18 (GISGGVDS) and I37. The Nucleophile role is filled by C99. C99 and C195 are disulfide-bonded. G123 serves as a coordination point for ATP. Residues 145–147 (KDQ) form an interaction with tRNA region. The active-site Cysteine persulfide intermediate is C195. The interval 304–305 (RY) is interaction with tRNA.

Belongs to the MnmA/TRMU family.

It localises to the cytoplasm. The catalysed reaction is S-sulfanyl-L-cysteinyl-[protein] + uridine(34) in tRNA + AH2 + ATP = 2-thiouridine(34) in tRNA + L-cysteinyl-[protein] + A + AMP + diphosphate + H(+). In terms of biological role, catalyzes the 2-thiolation of uridine at the wobble position (U34) of tRNA, leading to the formation of s(2)U34. The sequence is that of tRNA-specific 2-thiouridylase MnmA from Chlorobium phaeobacteroides (strain BS1).